We begin with the raw amino-acid sequence, 530 residues long: MTGSTVSRQENSPKRPNDSNGEFKRLLVPETSQPEEDELHESPPENQILNVEEDRDKTYDSVPPFSWAKLWKFTGPGFLMSIAFLDPGNIEGDLQAGAVAGYSLLWLLLWATLMGLLMQLLSARIGVATGRHLAEICRSEYPSWARILLWFMAEVALIGADIQEVIGSAIALQILTRGFLPIWVGVIITSFDCFLISYLEKCGMRKLEGLFAVLIATMALSFAWMFNETKPSVEELFIGIIIPKLGSKTIREAVGVVGCVITPHNVFLHSALVQSRKTDPKEINRVQEALNYYTIESSAALFVSFMINLFVTAVFAKGFYGTKQADSIGLVNAGYYLQEKYGGGVFPILYIWGIGLLAAGQSSTITGTYAGQFIMEGFLDLQMEQWLSAFITRSFAIVPTMFVAIMFNTSEGSLDVLNEWLNILQSMQIPFAVIPLLTMVSNEHIMGVFKIGPSLEKLAWTVAVFVMMINGYLLLDFFMAEVEGFLVGFLVFGGVVGYISFIIYLVSYRSSQSSSWSSLEMSERVVSTET.

The span at 1–10 (MTGSTVSRQE) shows a compositional bias: polar residues. The disordered stretch occupies residues 1–53 (MTGSTVSRQENSPKRPNDSNGEFKRLLVPETSQPEEDELHESPPENQILNVEE). The segment covering 11–27 (NSPKRPNDSNGEFKRLL) has biased composition (basic and acidic residues). 12 helical membrane-spanning segments follow: residues 65–85 (FSWAKLWKFTGPGFLMSIAFL), 98–118 (AVAGYSLLWLLLWATLMGLLM), 147–167 (ILLWFMAEVALIGADIQEVIG), 179–199 (FLPIWVGVIITSFDCFLISYL), 207–227 (LEGLFAVLIATMALSFAWMFN), 253–273 (AVGVVGCVITPHNVFLHSALV), 299–319 (AALFVSFMINLFVTAVFAKGF), 341–361 (YGGGVFPILYIWGIGLLAAGQ), 387–407 (LSAFITRSFAIVPTMFVAIMF), 429–449 (IPFAVIPLLTMVSNEHIMGVF), 458–478 (LAWTVAVFVMMINGYLLLDFF), and 485–505 (FLVGFLVFGGVVGYISFIIYL).

The protein belongs to the NRAMP (TC 2.A.55) family.

It is found in the membrane. Its function is as follows. Seems to be involved in iron uptake. The sequence is that of Metal transporter Nramp5 (NRAMP5) from Arabidopsis thaliana (Mouse-ear cress).